We begin with the raw amino-acid sequence, 209 residues long: CASP-like protein 2A1 (209 aa).

Topologically, residues 1–38 (MSKMAEEKVLAAPATVDGGMQSSGDLQASSAAAARVRP) are cytoplasmic. A helical transmembrane segment spans residues 39 to 59 (VETLLRAAPLGLCVAAMAIML). At 60-80 (RNSVTNEYGTVSYSDLGGFKY) the chain is on the extracellular side. A helical membrane pass occupies residues 81–101 (LVYANGLCAAYSLASAFYIAV). At 102 to 109 (PRPATLSR) the chain is on the cytoplasmic side. The helical transmembrane segment at 110–130 (SWVVFLLDQVFTYLILAAGAA) threads the bilayer. Residues 131 to 163 (SAELLYLAYNGDKEVTWSEACGVFGGFCRQART) lie on the Extracellular side of the membrane. A helical membrane pass occupies residues 164-184 (SVAITFASVACYILLSLISSY). Residues 185–209 (RLFSAYDPPQPSLGNKGVEIAAFPR) lie on the Cytoplasmic side of the membrane.

This sequence belongs to the Casparian strip membrane proteins (CASP) family. Homodimer and heterodimers.

Its subcellular location is the cell membrane. The polypeptide is CASP-like protein 2A1 (Oryza sativa subsp. indica (Rice)).